We begin with the raw amino-acid sequence, 509 residues long: MNEIKDTDSKKSEEYEDDFEKDLEWLINENEKSDASIIEMACEKEENINQDLKENETVIEHTKQHSDPDKSLQDDVSPRRNDIISVPGIQPLDPISDSDSENSFQESKLESQKDLEEEEDEEVRRYIMEKIVQANKLLQNQEPVNDKRERKLKFKDKLADLEVPPLEDTNTSKNYFENERNMFGKLSQLCISNDFGQENVLLSLTNASCEENKDRTILVERDGKFELLNLQDIASQGFLPPINNANSTENDPQHLLLRSSNSSVSGTKKEDSAAKIHAVTHSSTGEPLVYIPQPPLNRKTCPSSAANSDRSKGKGKYNHRTQSARISPVTSTYCLSPRQKELQKQLEQKREKLKREEEQRKIEEEKEKKRENDIVFKAWLQKKREQVLEMRRIQRAKEIEDMNSRQENRDPQQAFRLWLKKKHEEQMKERKTEELRKQEECLFFLKGTEGRERAFKQWLRRKRIEKIAEQQAVRERTRQLRLEAKHSKQLQHHLYMSEAKPFRFTDHYN.

Positions 60–82 (EHTKQHSDPDKSLQDDVSPRRND) are enriched in basic and acidic residues. Disordered stretches follow at residues 60 to 121 (EHTK…EEDE) and 285 to 367 (GEPL…EEKE). The segment covering 320–334 (RTQSARISPVTSTYC) has biased composition (polar residues). Positions 335 to 375 (LSPRQKELQKQLEQKREKLKREEEQRKIEEEKEKKRENDIV) form a coiled coil. Basic and acidic residues predominate over residues 338–367 (RQKELQKQLEQKREKLKREEEQRKIEEEKE).

Belongs to the CCDC181 family. As to quaternary structure, homodimer. Interacts with HOOK1. Interacts with HOOK2. Interacts with HOOK3.

The protein resides in the cytoplasm. It localises to the cytoskeleton. The protein localises to the cell projection. It is found in the cilium. Its subcellular location is the flagellum. Its function is as follows. Microtubule-binding protein that localizes to the microtubular manchette of elongating spermatids. This is Coiled-coil domain-containing protein 181 from Macaca fascicularis (Crab-eating macaque).